We begin with the raw amino-acid sequence, 66 residues long: Large ribosomal subunit protein uL29 (66 aa).

The protein belongs to the universal ribosomal protein uL29 family.

In Deinococcus deserti (strain DSM 17065 / CIP 109153 / LMG 22923 / VCD115), this protein is Large ribosomal subunit protein uL29.